A 127-amino-acid polypeptide reads, in one-letter code: Small ribosomal subunit protein uS11 (127 aa).

The protein belongs to the universal ribosomal protein uS11 family. As to quaternary structure, part of the 30S ribosomal subunit. Interacts with proteins S7 and S18. Binds to IF-3.

Located on the platform of the 30S subunit, it bridges several disparate RNA helices of the 16S rRNA. Forms part of the Shine-Dalgarno cleft in the 70S ribosome. This Lactococcus lactis subsp. lactis (strain IL1403) (Streptococcus lactis) protein is Small ribosomal subunit protein uS11.